The sequence spans 1067 residues: Tricorn protease homolog 1 (1067 aa).

Positions 518 to 551 are disordered; it reads TTPSPFGPQRHGRPFETPDREETPDSEGTPTTRI. Over residues 530–540 the composition is skewed to basic and acidic residues; the sequence is RPFETPDREET. His740 serves as the catalytic Charge relay system. Residues 754–851 form a PDZ-like region; the sequence is RQGLLGADLS…HAVVVPLADE (98 aa). Gly914 lines the substrate pocket. Residue Ser961 is the Nucleophile of the active site. Catalysis depends on Glu1019, which acts as the Charge relay system.

It belongs to the peptidase S41B family. Forms a homohexameric complex; it is not known if it assembles into higher-order structures.

Its subcellular location is the cytoplasm. With respect to regulation, stimulated by MgCl2. In terms of biological role, degrades oligopeptides in a sequential manner. The polypeptide is Tricorn protease homolog 1 (tri1) (Streptomyces coelicolor (strain ATCC BAA-471 / A3(2) / M145)).